We begin with the raw amino-acid sequence, 122 residues long: Large ribosomal subunit protein uL14 (122 aa).

It belongs to the universal ribosomal protein uL14 family. In terms of assembly, part of the 50S ribosomal subunit. Forms a cluster with proteins L3 and L19. In the 70S ribosome, L14 and L19 interact and together make contacts with the 16S rRNA in bridges B5 and B8.

In terms of biological role, binds to 23S rRNA. Forms part of two intersubunit bridges in the 70S ribosome. This is Large ribosomal subunit protein uL14 from Agathobacter rectalis (strain ATCC 33656 / DSM 3377 / JCM 17463 / KCTC 5835 / VPI 0990) (Eubacterium rectale).